The primary structure comprises 224 residues: 3-dehydroquinate dehydratase (224 aa).

Residues Glu30–Arg32 and Arg62 contribute to the 3-dehydroquinate site. The active-site Proton donor/acceptor is His118. Lys143 acts as the Schiff-base intermediate with substrate in catalysis. 3 residues coordinate 3-dehydroquinate: Arg186, Ser205, and Gln209.

This sequence belongs to the type-I 3-dehydroquinase family. Homodimer.

It carries out the reaction 3-dehydroquinate = 3-dehydroshikimate + H2O. Its pathway is metabolic intermediate biosynthesis; chorismate biosynthesis; chorismate from D-erythrose 4-phosphate and phosphoenolpyruvate: step 3/7. Its function is as follows. Involved in the third step of the chorismate pathway, which leads to the biosynthesis of aromatic amino acids. Catalyzes the cis-dehydration of 3-dehydroquinate (DHQ) and introduces the first double bond of the aromatic ring to yield 3-dehydroshikimate. In Streptococcus suis (strain 98HAH33), this protein is 3-dehydroquinate dehydratase.